The sequence spans 406 residues: 2-epi-valiolone synthase (406 aa).

Positions 1–21 are disordered; the sequence is MPSTGSTPILAHDVKSPHRGS. Residues 105–108, 137–141, 161–162, K174, K183, and 201–204 each bind NAD(+); these read EPSK, GVLCD, TS, and CLAT. E216, H287, and H304 together coordinate Zn(2+).

The protein belongs to the sugar phosphate cyclases superfamily. EVS family. NAD(+) serves as cofactor. The cofactor is Co(2+). It depends on Zn(2+) as a cofactor.

The enzyme catalyses D-sedoheptulose 7-phosphate = 2-epi-valiolone + phosphate. Its function is as follows. Catalyzes the conversion of sedoheptulose 7-phosphate to 2-epi-valiolone, which may serve as an alternative precursor for aminocyclitol biosynthesis. The polypeptide is 2-epi-valiolone synthase (Stigmatella aurantiaca (strain DW4/3-1)).